A 642-amino-acid polypeptide reads, in one-letter code: Terminase, large subunit (642 aa).

An interaction with the terminase small subunit region spans residues 1–48 (MISDAQKAANAAGAIATGLLSLIIPVPLTTVQWANKHYYLPKESSYTP). A Q motif motif is present at residues 42–51 (KESSYTPGRW). The short motif at 76-83 (KSARVGYT) is the Walker A motif element. A DNA packaging/ATPase region spans residues 166-353 (NYREKSVDVV…LDALKDPNGL (188 aa)). Positions 174–179 (VVCYDE) match the Walker B motif motif. Glu-179 functions as the For ATPase activity in the catalytic mechanism. Asp-401 contacts Mg(2+). The interval 401–587 (DSQRNRFEMY…LWDNKKRRNE (187 aa)) is endonuclease. 491–498 (GASVYGKP) serves as a coordination point for ATP. A basic region spans residues 574–585 (KMRLLWDNKKRR). The interval 589-617 (LDCLVYAYAALRVSVQRWQLDLAVLAKSR) is leucine zipper. The segment at 611–642 (AVLAKSREEETTRPTLKELAAKLSGGVNGYSR) is prohead binding.

This sequence belongs to the lambdavirus large terminase family. As to quaternary structure, heterotrimer of two small and one large terminase subunits. The catalytically competent terminase is composed of a tetramer of heterotrimers. The tetramer forms a ring structure large enough to encircle duplex DNA. Host IHFA/IHFB induces bending of viral DNA to facilitate the assembly of the terminase tetramer of heterotrimers. Interacts (via N-terminus) with the terminase small subunit (via C-terminus). Interacts (via C-terminus) with the portal protein; this interaction allows the packaging of viral DNA. Mg(2+) serves as cofactor.

Its subcellular location is the host cytoplasm. It catalyses the reaction Endonucleolytic cleavage of DNA to give specific double-stranded fragments with terminal 5'-phosphates.. In terms of biological role, the terminase large subunit acts as an ATP driven molecular motor necessary for viral DNA translocation into empty capsids and as an endonuclease that cuts the viral genome from the concetamer to initiate and to end the packaging reaction. The terminase lies at a unique vertex of the procapsid and is composed of two subunits, a small terminase subunit involved in viral DNA recognition (binding to packaging sequence cos), and a large terminase subunit possessing endonucleolytic and ATPase activities (DNA maturation and packaging). The terminase binds cooperatively with the host factor IHFA/IHFB to the cos site at the junction of adjacent viral genomes. The endonuclease activity cleaves the viral DNA generating 5'overhangs of 12 bp in length. The strand separation activity separates the cohesive ends generating the single-stranded 'sticky' ends of the mature genome. IHFA/IHFB is also necessary for the strand separation activity of the terminase. The terminase remains bound to the left end of the genome to be packaged, forming a stable DNA-terminase complex. In a reaction facilitated by the viral assembly catalyst gpFI, the DNA-terminase complex binds to the portal of the procapsid thereby activating the translocase activity of the terminase. The terminase packages the viral DNA into the procapsid until the next cos site on the concatemer reaches the complex. The downstream cos site is then cut generating the mature right end of the genome, the heterotrimer undocks from the DNA-filled head and remains bound to the left end of concatemer's next genome. This is Terminase, large subunit (2) from Escherichia coli (Bacteriophage 21).